The primary structure comprises 152 residues: Xanthine-guanine phosphoribosyltransferase (152 aa).

5-phospho-alpha-D-ribose 1-diphosphate contacts are provided by residues 37–38 (RG), Arg69, and 88–96 (DDLVDTGGT). Residue Arg69 coordinates GMP. Asp89 is a Mg(2+) binding site. Guanine-binding residues include Asp92 and Ile135. Residues Asp92 and Ile135 each coordinate xanthine. Residues 92-96 (DTGGT) and 134-135 (WI) each bind GMP.

It belongs to the purine/pyrimidine phosphoribosyltransferase family. XGPT subfamily. As to quaternary structure, homotetramer. It depends on Mg(2+) as a cofactor.

It localises to the cell inner membrane. The catalysed reaction is GMP + diphosphate = guanine + 5-phospho-alpha-D-ribose 1-diphosphate. The enzyme catalyses XMP + diphosphate = xanthine + 5-phospho-alpha-D-ribose 1-diphosphate. It carries out the reaction IMP + diphosphate = hypoxanthine + 5-phospho-alpha-D-ribose 1-diphosphate. It functions in the pathway purine metabolism; GMP biosynthesis via salvage pathway; GMP from guanine: step 1/1. Its pathway is purine metabolism; XMP biosynthesis via salvage pathway; XMP from xanthine: step 1/1. Its function is as follows. Purine salvage pathway enzyme that catalyzes the transfer of the ribosyl-5-phosphate group from 5-phospho-alpha-D-ribose 1-diphosphate (PRPP) to the N9 position of the 6-oxopurines guanine and xanthine to form the corresponding ribonucleotides GMP (guanosine 5'-monophosphate) and XMP (xanthosine 5'-monophosphate), with the release of PPi. To a lesser extent, also acts on hypoxanthine. This chain is Xanthine-guanine phosphoribosyltransferase, found in Pectobacterium carotovorum subsp. carotovorum (strain PC1).